Consider the following 293-residue polypeptide: Rhomboid-like protease 1 (293 aa).

The interval 18–40 (EHTPLYNAETGSRDSDSTSSGGA) is disordered. 6 helical membrane passes run 62-82 (VVLA…CLDT), 112-132 (LLLP…VFFQ), 148-168 (FTGL…TAFF), 174-194 (VGAS…MALT), 217-237 (LLMF…GGLL), and 262-282 (AAAI…LYAV). Ser-177 functions as the Nucleophile in the catalytic mechanism. The active site involves His-232.

Belongs to the peptidase S54 family.

The protein localises to the cytoplasmic vesicle. Its subcellular location is the secretory vesicle. It localises to the microneme membrane. It catalyses the reaction Cleaves type-1 transmembrane domains using a catalytic dyad composed of serine and histidine that are contributed by different transmembrane domains.. In terms of biological role, serine protease involved in intramembrane proteolysis and the subsequent release of polypeptides from their membrane anchors. Has no detectable activity towards MIC2. The chain is Rhomboid-like protease 1 (ROM1) from Toxoplasma gondii.